The primary structure comprises 293 residues: Phosphate import ATP-binding protein PstB (293 aa).

The ABC transporter domain occupies 46 to 288; that stretch reads FGIRGVDVFY…PDHELTEAYI (243 aa). Residue 78-85 participates in ATP binding; the sequence is GPSGCGKS.

Belongs to the ABC transporter superfamily. Phosphate importer (TC 3.A.1.7) family. As to quaternary structure, the complex is composed of two ATP-binding proteins (PstB), two transmembrane proteins (PstC and PstA) and a solute-binding protein (PstS).

Its subcellular location is the cell inner membrane. The catalysed reaction is phosphate(out) + ATP + H2O = ADP + 2 phosphate(in) + H(+). Functionally, part of the ABC transporter complex PstSACB involved in phosphate import. Responsible for energy coupling to the transport system. The sequence is that of Phosphate import ATP-binding protein PstB from Saccharophagus degradans (strain 2-40 / ATCC 43961 / DSM 17024).